A 203-amino-acid polypeptide reads, in one-letter code: FMN-dependent NADH:quinone oxidoreductase (203 aa).

FMN is bound by residues Ser-9, 15 to 17, and 139 to 142; these read SVS and TRGG.

It belongs to the azoreductase type 1 family. In terms of assembly, homodimer. It depends on FMN as a cofactor.

The enzyme catalyses 2 a quinone + NADH + H(+) = 2 a 1,4-benzosemiquinone + NAD(+). The catalysed reaction is N,N-dimethyl-1,4-phenylenediamine + anthranilate + 2 NAD(+) = 2-(4-dimethylaminophenyl)diazenylbenzoate + 2 NADH + 2 H(+). Its function is as follows. Quinone reductase that provides resistance to thiol-specific stress caused by electrophilic quinones. In terms of biological role, also exhibits azoreductase activity. Catalyzes the reductive cleavage of the azo bond in aromatic azo compounds to the corresponding amines. The polypeptide is FMN-dependent NADH:quinone oxidoreductase (Albidiferax ferrireducens (strain ATCC BAA-621 / DSM 15236 / T118) (Rhodoferax ferrireducens)).